We begin with the raw amino-acid sequence, 337 residues long: MSEQKETVHIGTRRSALALRQVDLVIAALQPHHPNVHFQVHALATLGDKNQTASLPSLGKGLWTNELEAKLFNKEVDFIVHCLKDMPTTLPEGGKIGVVTEREDPRDVVVMKKKWAEQGKYKSLADLPEGAIVGTSSVRRAAQLRRRYPGLVFKDVRGNIETRMRKCDEEDYDCIILAAAGLLRMGYDERIAQWLDSTTEGGGMLHAVGQGALAMEIREGDEKTLEIIKPLCHEKTMVATFAERAVMRTLEGGCSVPIGVETKWVGEDQLQLKVTVVSLDGKESVDGQSVEVIKTIEEAEAMGQKLAEDLAKRGAQKILDFVNQGRASGGALKIGDL.

The residue at position 254 (cysteine 254) is an S-(dipyrrolylmethanemethyl)cysteine.

This sequence belongs to the HMBS family. The cofactor is dipyrromethane.

It catalyses the reaction 4 porphobilinogen + H2O = hydroxymethylbilane + 4 NH4(+). It functions in the pathway porphyrin-containing compound metabolism; protoporphyrin-IX biosynthesis; coproporphyrinogen-III from 5-aminolevulinate: step 2/4. Its function is as follows. Tetrapolymerization of the monopyrrole PBG into the hydroxymethylbilane pre-uroporphyrinogen in several discrete steps. This is Porphobilinogen deaminase (pda-1) from Neurospora crassa (strain ATCC 24698 / 74-OR23-1A / CBS 708.71 / DSM 1257 / FGSC 987).